A 382-amino-acid chain; its full sequence is 1-deoxy-D-xylulose 5-phosphate reductoisomerase (382 aa).

Positions 10, 11, 12, 13, 36, and 122 each coordinate NADPH. Lys123 serves as a coordination point for 1-deoxy-D-xylulose 5-phosphate. Glu124 contacts NADPH. Asp148 lines the Mn(2+) pocket. Residues Ser149, Glu150, Ser174, and His197 each contribute to the 1-deoxy-D-xylulose 5-phosphate site. Glu150 contributes to the Mn(2+) binding site. Gly203 serves as a coordination point for NADPH. Positions 210, 215, 216, and 219 each coordinate 1-deoxy-D-xylulose 5-phosphate. Glu219 lines the Mn(2+) pocket.

This sequence belongs to the DXR family. Requires Mg(2+) as cofactor. It depends on Mn(2+) as a cofactor.

It carries out the reaction 2-C-methyl-D-erythritol 4-phosphate + NADP(+) = 1-deoxy-D-xylulose 5-phosphate + NADPH + H(+). It functions in the pathway isoprenoid biosynthesis; isopentenyl diphosphate biosynthesis via DXP pathway; isopentenyl diphosphate from 1-deoxy-D-xylulose 5-phosphate: step 1/6. Catalyzes the NADPH-dependent rearrangement and reduction of 1-deoxy-D-xylulose-5-phosphate (DXP) to 2-C-methyl-D-erythritol 4-phosphate (MEP). The polypeptide is 1-deoxy-D-xylulose 5-phosphate reductoisomerase (Chlorobium phaeobacteroides (strain BS1)).